The following is a 205-amino-acid chain: Purine catabolism protein PucB (205 aa).

The protein operates within purine metabolism; hypoxanthine degradation. Required for xanthine dehydrogenase activity. Could be involved in formation of the molybdenum cofactor required by xanthine dehydrogenase. In Bacillus subtilis (strain 168), this protein is Purine catabolism protein PucB (pucB).